The sequence spans 391 residues: Flagellin (391 aa).

This sequence belongs to the bacterial flagellin family.

Its subcellular location is the secreted. The protein resides in the bacterial flagellum. In terms of biological role, flagellin is the subunit protein which polymerizes to form the filaments of bacterial flagella. This Bordetella bronchiseptica (strain ATCC BAA-588 / NCTC 13252 / RB50) (Alcaligenes bronchisepticus) protein is Flagellin (flaA).